The following is a 594-amino-acid chain: Beta-mannosyltransferase 3 (594 aa).

Residues 1–6 (MRIRSN) lie on the Cytoplasmic side of the membrane. Residues 7–27 (VLLLSTAGALALVWFAVVFSW) form a helical membrane-spanning segment. Residues 28–594 (DDKSIFGIPT…KDEVKDTKAK (567 aa)) are Extracellular-facing. Residue Asn305 is glycosylated (N-linked (GlcNAc...) asparagine). A coiled-coil region spans residues 512–594 (VTRGEEDRLK…KDEVKDTKAK (83 aa)). A compositionally biased stretch (basic and acidic residues) spans 517–558 (EDRLKNKEKERKIEEKRKKEEERKKKEEEKKKKEEEEKKKKE). A disordered region spans residues 517–564 (EDRLKNKEKERKIEEKRKKEEERKKKEEEKKKKEEEEKKKKEEEEEEE).

Belongs to the BMT family.

Its subcellular location is the membrane. Functionally, beta-mannosyltransferase involved in cell wall biosynthesis. The polypeptide is Beta-mannosyltransferase 3 (BMT3) (Komagataella phaffii (strain ATCC 76273 / CBS 7435 / CECT 11047 / NRRL Y-11430 / Wegner 21-1) (Yeast)).